A 509-amino-acid polypeptide reads, in one-letter code: Light-independent protochlorophyllide reductase subunit B (509 aa).

A [4Fe-4S] cluster-binding site is contributed by Asp36. Asp298 functions as the Proton donor in the catalytic mechanism. Residue 433-434 participates in substrate binding; that stretch reads GM.

It belongs to the ChlB/BchB/BchZ family. In terms of assembly, protochlorophyllide reductase is composed of three subunits; ChlL, ChlN and ChlB. Forms a heterotetramer of two ChlB and two ChlN subunits. [4Fe-4S] cluster serves as cofactor.

The protein resides in the plastid. It localises to the chloroplast. It catalyses the reaction chlorophyllide a + oxidized 2[4Fe-4S]-[ferredoxin] + 2 ADP + 2 phosphate = protochlorophyllide a + reduced 2[4Fe-4S]-[ferredoxin] + 2 ATP + 2 H2O. The protein operates within porphyrin-containing compound metabolism; chlorophyll biosynthesis (light-independent). In terms of biological role, component of the dark-operative protochlorophyllide reductase (DPOR) that uses Mg-ATP and reduced ferredoxin to reduce ring D of protochlorophyllide (Pchlide) to form chlorophyllide a (Chlide). This reaction is light-independent. The NB-protein (ChlN-ChlB) is the catalytic component of the complex. The protein is Light-independent protochlorophyllide reductase subunit B of Ephedra altissima (High-climbing jointfir).